The following is a 242-amino-acid chain: Venom nerve growth factor 1 (242 aa).

An N-terminal signal peptide occupies residues 1–18; that stretch reads MSMLCYTLIIAFLIGIWA. A propeptide spanning residues 19-125 is cleaved from the precursor; the sequence is APKSEDNVPL…ALNRNIRSKR (107 aa). The segment at 26–69 is disordered; sequence VPLGSPATSDLSDTSCAQTHKALKTSRNTDQRHPAPKKAEDQEL. Over residues 31-43 the composition is skewed to polar residues; the sequence is PATSDLSDTSCAQ. Over residues 52 to 66 the composition is skewed to basic and acidic residues; that stretch reads RNTDQRHPAPKKAED. 3 disulfides stabilise this stretch: Cys-139-Cys-203, Cys-181-Cys-231, and Cys-191-Cys-233. N-linked (GlcNAc...) asparagine glycosylation is present at Asn-147.

Belongs to the NGF-beta family. In terms of assembly, homodimer; non-covalently linked. Expressed by the venom gland.

It is found in the secreted. Nerve growth factor is important for the development and maintenance of the sympathetic and sensory nervous systems. It stimulates division and differentiation of sympathetic and embryonic sensory neurons as well as basal forebrain cholinergic neurons in the brain. Its relevance in the snake venom is not clear. However, it has been shown to inhibit metalloproteinase-dependent proteolysis of platelet glycoprotein Ib alpha, suggesting a metalloproteinase inhibition to prevent metalloprotease autodigestion and/or protection against prey proteases. Binds a lipid between the two protein chains in the homodimer. The lipid-bound form promotes histamine relase from mouse mast cells, contrary to the lipid-free form. The polypeptide is Venom nerve growth factor 1 (Demansia vestigiata (Lesser black whip snake)).